A 485-amino-acid chain; its full sequence is MSDFTSKVKVLRDGQKPEFPSNANTLEYAQSLDAQDELRHFRNEFIIPTRASLKKKALDGIIPGTQANGTTTSTDADTPCIYFVGNSLGAQPKAVRHYLEAQLETWASIGVNGHFSSLSNSPLTPWQDMAADCAAKSAAIVGAADPSEVVIMNTLTVNLHFMMASFYRPTDKRHKIILEWRPFPSDWYAFQSQIEWHGLDPEKSIVEMQPDENLYLSTEKILATIDEHAEDAALLLLPGIQYYTGQLFDIPRITKYAQERGIVVGWDLAHCAGNVELQLHDWNVDFAVWCTYKYLNGGPGSMAGAFVHERHGKVDMSLGKPVFKPRLSGWYGADKSVRFNMDKEFQPTPGAQGFQVSNPSAIDLTSLAAALSVFNKTSMKDLRSKALVLTAYTEHLLDEIVRRQPEGEEPAFKIITPRDPLQRGTQLSLLLRDGLMDKVAAALEENGVVCDKRKPNVIRVAPVPMYCRFEDVWKFMEIFEAAIRG.

Pyridoxal 5'-phosphate contacts are provided by residues Leu-155, Thr-156, 183 to 186 (FPSD), Asp-267, His-270, and Tyr-292. Position 293 is an N6-(pyridoxal phosphate)lysine (Lys-293). Trp-330 and Asn-358 together coordinate pyridoxal 5'-phosphate.

It belongs to the kynureninase family. In terms of assembly, homodimer. It depends on pyridoxal 5'-phosphate as a cofactor.

The protein localises to the cytoplasm. It catalyses the reaction L-kynurenine + H2O = anthranilate + L-alanine + H(+). The enzyme catalyses 3-hydroxy-L-kynurenine + H2O = 3-hydroxyanthranilate + L-alanine + H(+). Its pathway is amino-acid degradation; L-kynurenine degradation; L-alanine and anthranilate from L-kynurenine: step 1/1. It functions in the pathway cofactor biosynthesis; NAD(+) biosynthesis; quinolinate from L-kynurenine: step 2/3. Catalyzes the cleavage of L-kynurenine (L-Kyn) and L-3-hydroxykynurenine (L-3OHKyn) into anthranilic acid (AA) and 3-hydroxyanthranilic acid (3-OHAA), respectively. This chain is Kynureninase 1 (kyn-1), found in Neurospora crassa (strain ATCC 24698 / 74-OR23-1A / CBS 708.71 / DSM 1257 / FGSC 987).